The chain runs to 84 residues: Kappa-scoloptoxin(11)-Ssm3a (84 aa).

Residues 1-16 form the signal peptide; it reads MSWMFYSFIVFTLAIK.

The protein belongs to the scoloptoxin-11 family. Post-translationally, contains 2 disulfide bonds. As to expression, expressed by the venom gland.

It localises to the secreted. Its function is as follows. Inhibits voltage-gated potassium channel currents in DRG neurons. 200 nM of the toxin inhibits current amplitude by only 25% and even at concentrations up to 5 uM, the toxin does not inhibit all potassium currents. In vivo, insects injected with this toxin showed signs of neurotoxicity including twitching, paralysis, and body contraction. The protein is Kappa-scoloptoxin(11)-Ssm3a of Scolopendra mutilans (Chinese red-headed centipede).